The primary structure comprises 1185 residues: Ovostatin homolog 1 (1185 aa).

The N-terminal stretch at 1–21 is a signal peptide; it reads MHVHVCVCLCVCIYTSSCVCA. N80, N155, N347, N452, and N725 each carry an N-linked (GlcNAc...) asparagine glycan.

The protein belongs to the protease inhibitor I39 (alpha-2-macroglobulin) family. In terms of assembly, homotetramer.

The protein localises to the secreted. In terms of biological role, is able to inhibit all four classes of proteinases by a unique 'trapping' mechanism. This is Ovostatin homolog 1 (OVOS1) from Homo sapiens (Human).